Consider the following 78-residue polypeptide: UPF0154 protein lp_2061 (78 aa).

A helical membrane pass occupies residues 5–27; the sequence is TGIWILIVVIGVLVGLTGGFFGA.

This sequence belongs to the UPF0154 family.

The protein resides in the membrane. This chain is UPF0154 protein lp_2061, found in Lactiplantibacillus plantarum (strain ATCC BAA-793 / NCIMB 8826 / WCFS1) (Lactobacillus plantarum).